Consider the following 369-residue polypeptide: GTPase Obg (369 aa).

One can recognise an Obg domain in the interval 1 to 159 (MKFVDEVTID…KNLKLELRVL (159 aa)). In terms of domain architecture, OBG-type G spans 160–334 (ADVGLLGMPN…LIHAIYSHVA (175 aa)). GTP is bound by residues 166 to 173 (GMPNAGKS), 191 to 195 (FTTLH), 213 to 216 (DIPG), 284 to 287 (NKLD), and 315 to 317 (SAL). Serine 173 and threonine 193 together coordinate Mg(2+). The segment at 339–369 (QPEEVPDPRFTTNEDLSEAAPAPDRDDPRFR) is disordered.

This sequence belongs to the TRAFAC class OBG-HflX-like GTPase superfamily. OBG GTPase family. As to quaternary structure, monomer. Mg(2+) is required as a cofactor.

It localises to the cytoplasm. Its function is as follows. An essential GTPase which binds GTP, GDP and possibly (p)ppGpp with moderate affinity, with high nucleotide exchange rates and a fairly low GTP hydrolysis rate. Plays a role in control of the cell cycle, stress response, ribosome biogenesis and in those bacteria that undergo differentiation, in morphogenesis control. This Leptothrix cholodnii (strain ATCC 51168 / LMG 8142 / SP-6) (Leptothrix discophora (strain SP-6)) protein is GTPase Obg.